Consider the following 413-residue polypeptide: 2,3-bisphosphoglycerate-independent phosphoglycerate mutase (413 aa).

It belongs to the BPG-independent phosphoglycerate mutase family. A-PGAM subfamily.

It carries out the reaction (2R)-2-phosphoglycerate = (2R)-3-phosphoglycerate. It participates in carbohydrate degradation; glycolysis; pyruvate from D-glyceraldehyde 3-phosphate: step 3/5. Its function is as follows. Catalyzes the interconversion of 2-phosphoglycerate and 3-phosphoglycerate. In Metallosphaera sedula (strain ATCC 51363 / DSM 5348 / JCM 9185 / NBRC 15509 / TH2), this protein is 2,3-bisphosphoglycerate-independent phosphoglycerate mutase.